The primary structure comprises 45 residues: Large ribosomal subunit protein bL34 (45 aa).

Residues 1 to 45 (MTKRTFGGTSRKRKRVSGFRVRMRSHTGRRVVRTRRKRGRSRLTV) form a disordered region. The segment covering 10–45 (SRKRKRVSGFRVRMRSHTGRRVVRTRRKRGRSRLTV) has biased composition (basic residues).

Belongs to the bacterial ribosomal protein bL34 family.

In Prochlorococcus marinus (strain NATL2A), this protein is Large ribosomal subunit protein bL34.